We begin with the raw amino-acid sequence, 387 residues long: Fructose-1,6-bisphosphate aldolase/phosphatase (387 aa).

The Proton acceptor; for FBP phosphatase activity role is filled by D13. Positions 13, 20, 54, and 55 each coordinate Mg(2+). Residue H20 participates in beta-D-fructose 1,6-bisphosphate binding. H20 provides a ligand contact to dihydroxyacetone phosphate. Y92 provides a ligand contact to beta-D-fructose 1,6-bisphosphate. Residue Q96 coordinates Mg(2+). 105-106 is a binding site for beta-D-fructose 1,6-bisphosphate; it reads GN. D133 contributes to the Mg(2+) binding site. Residue K134 coordinates beta-D-fructose 1,6-bisphosphate. K134 lines the dihydroxyacetone phosphate pocket. Y229 acts as the Proton donor/acceptor; for FBP aldolase activity in catalysis. The Mg(2+) site is built by K232, D233, and D234. K232 acts as the Schiff-base intermediate with DHAP; for FBP aldolase activity in catalysis. Beta-D-fructose 1,6-bisphosphate-binding positions include 242-243, R266, D287, and Y348; that span reads QS. Residues R266 and D287 each contribute to the dihydroxyacetone phosphate site.

It belongs to the FBP aldolase/phosphatase family. As to quaternary structure, homooctamer; dimer of tetramers. Mg(2+) is required as a cofactor.

It catalyses the reaction beta-D-fructose 1,6-bisphosphate + H2O = beta-D-fructose 6-phosphate + phosphate. The enzyme catalyses beta-D-fructose 1,6-bisphosphate = D-glyceraldehyde 3-phosphate + dihydroxyacetone phosphate. The protein operates within carbohydrate biosynthesis; gluconeogenesis. Catalyzes two subsequent steps in gluconeogenesis: the aldol condensation of dihydroxyacetone phosphate (DHAP) and glyceraldehyde-3-phosphate (GA3P) to fructose-1,6-bisphosphate (FBP), and the dephosphorylation of FBP to fructose-6-phosphate (F6P). The polypeptide is Fructose-1,6-bisphosphate aldolase/phosphatase (Ignicoccus hospitalis (strain KIN4/I / DSM 18386 / JCM 14125)).